A 471-amino-acid polypeptide reads, in one-letter code: Heparan-sulfate 6-O-sulfotransferase 3 (471 aa).

Residues 1 to 4 (MDER) lie on the Cytoplasmic side of the membrane. A helical; Signal-anchor for type II membrane protein membrane pass occupies residues 5–27 (FNKWLLTPVLTLLFVVIMYQYVS). Residues 28–471 (PSCTSSCTNF…EDYNSQVVRW (444 aa)) lie on the Lumenal side of the membrane. Residues 39-122 (EQPRAGEAGP…EAPENGSLPR (84 aa)) are disordered. Residues 41–62 (PRAGEAGPPAVPGPARRAQAPP) show a composition bias toward low complexity. Residues 70-81 (QLPPPPRGPPEG) show a composition bias toward pro residues. The segment covering 88–114 (PEEEDEEPGDPREGEEEEEEDEPDPEA) has biased composition (acidic residues). Asn-117 and Asn-128 each carry an N-linked (GlcNAc...) asparagine glycan. 152 to 160 (HIQKTGGTT) contacts 3'-phosphoadenylyl sulfate. Residues 182–183 (KK), Arg-199, Trp-204, and His-209 contribute to the substrate site. His-209 functions as the Proton acceptor in the catalytic mechanism. Residue Asn-231 is glycosylated (N-linked (GlcNAc...) asparagine). 3'-phosphoadenylyl sulfate-binding residues include Arg-245 and Ser-253. Residues His-257 and Trp-264 each coordinate substrate. N-linked (GlcNAc...) asparagine glycans are attached at residues Asn-324 and Asn-329. 377-379 (TQF) is a 3'-phosphoadenylyl sulfate binding site. N-linked (GlcNAc...) asparagine glycosylation is present at Asn-380. 383–384 (RA) serves as a coordination point for 3'-phosphoadenylyl sulfate. Residues 422 to 471 (TKQLEHQRDRQKRREERRLQREHRDHQWPKEDGAAEGTVTEDYNSQVVRW) form a disordered region. Over residues 423–454 (KQLEHQRDRQKRREERRLQREHRDHQWPKEDG) the composition is skewed to basic and acidic residues. Polar residues predominate over residues 462–471 (EDYNSQVVRW).

It belongs to the sulfotransferase 6 family.

Its subcellular location is the membrane. The enzyme catalyses alpha-D-glucosaminyl-[heparan sulfate](n) + 3'-phosphoadenylyl sulfate = 6-sulfo-alpha-D-glucosaminyl-[heparan sulfate](n) + adenosine 3',5'-bisphosphate + H(+). 6-O-sulfation enzyme which catalyzes the transfer of sulfate from 3'-phosphoadenosine 5'-phosphosulfate (PAPS) to position 6 of the N-sulfoglucosamine residue (GlcNS) of heparan sulfate. This Homo sapiens (Human) protein is Heparan-sulfate 6-O-sulfotransferase 3 (HS6ST3).